The following is a 308-amino-acid chain: Ornithine carbamoyltransferase (308 aa).

Carbamoyl phosphate-binding positions include 56 to 59 (STRT), glutamine 83, arginine 107, and 134 to 137 (HPCQ). L-ornithine is bound by residues asparagine 165, aspartate 225, and 229 to 230 (SM). Residues 266 to 267 (CL) and arginine 294 contribute to the carbamoyl phosphate site.

This sequence belongs to the aspartate/ornithine carbamoyltransferase superfamily. OTCase family.

It is found in the cytoplasm. The catalysed reaction is carbamoyl phosphate + L-ornithine = L-citrulline + phosphate + H(+). Its pathway is amino-acid biosynthesis; L-arginine biosynthesis; L-arginine from L-ornithine and carbamoyl phosphate: step 1/3. In terms of biological role, reversibly catalyzes the transfer of the carbamoyl group from carbamoyl phosphate (CP) to the N(epsilon) atom of ornithine (ORN) to produce L-citrulline. The polypeptide is Ornithine carbamoyltransferase (Roseobacter denitrificans (strain ATCC 33942 / OCh 114) (Erythrobacter sp. (strain OCh 114))).